A 355-amino-acid chain; its full sequence is Phospho-N-acetylmuramoyl-pentapeptide-transferase (355 aa).

Helical transmembrane passes span 14–34 (PTGTHLLILLTGLLFLLVVFF), 40–60 (LLIPLMATTLISAGLGCQVVP), 84–104 (GTPTMGGSFFVPVALIFALIW), 107–127 (FTPNVVAVALLTFVYMGIGWL), 147–167 (LILQITGAVLFCLWMLVNQVS), 176–196 (LVIPLGFFFWILAGFVLVAES), 205–225 (VDGLAGGTGAIAFLGLGIIIA), 227–247 (SHPDLAIFCTCFAGACLGFIF), 268–290 (ALAAVGLIAGHLWGLFLISGLFF), and 334–354 (TKIVGAFYLVNALLVVLAIWS).

Belongs to the glycosyltransferase 4 family. MraY subfamily. Requires Mg(2+) as cofactor.

The protein localises to the cell inner membrane. The enzyme catalyses UDP-N-acetyl-alpha-D-muramoyl-L-alanyl-gamma-D-glutamyl-meso-2,6-diaminopimeloyl-D-alanyl-D-alanine + di-trans,octa-cis-undecaprenyl phosphate = di-trans,octa-cis-undecaprenyl diphospho-N-acetyl-alpha-D-muramoyl-L-alanyl-D-glutamyl-meso-2,6-diaminopimeloyl-D-alanyl-D-alanine + UMP. The protein operates within cell wall biogenesis; peptidoglycan biosynthesis. Catalyzes the initial step of the lipid cycle reactions in the biosynthesis of the cell wall peptidoglycan: transfers peptidoglycan precursor phospho-MurNAc-pentapeptide from UDP-MurNAc-pentapeptide onto the lipid carrier undecaprenyl phosphate, yielding undecaprenyl-pyrophosphoryl-MurNAc-pentapeptide, known as lipid I. The sequence is that of Phospho-N-acetylmuramoyl-pentapeptide-transferase from Microcystis aeruginosa (strain NIES-843 / IAM M-2473).